We begin with the raw amino-acid sequence, 458 residues long: Monomethylamine methyltransferase MtmB (458 aa).

Pyl202 is a non-standard amino acid (pyrrolysine).

The protein belongs to the monomethylamine methyltransferase family. As to quaternary structure, can form a complex with MtmC.

The catalysed reaction is Co(I)-[methylamine-specific corrinoid protein] + methylamine + H(+) = methyl-Co(III)-[methylamine-specific corrinoid protein] + NH4(+). Its pathway is one-carbon metabolism; methanogenesis from methylamine. In terms of biological role, catalyzes the transfer of the methyl group from monomethylamine to the corrinoid cofactor of MtmC. This Methanosarcina mazei (strain ATCC BAA-159 / DSM 3647 / Goe1 / Go1 / JCM 11833 / OCM 88) (Methanosarcina frisia) protein is Monomethylamine methyltransferase MtmB (mtmB1).